A 299-amino-acid polypeptide reads, in one-letter code: Probable lipid kinase YegS (299 aa).

Positions 2-133 constitute a DAGKc domain; sequence AEFPASLLIL…IDMAQVNKQT (132 aa). Residues T40, 66–72, and T95 contribute to the ATP site; that span reads GDGTINE. Mg(2+)-binding residues include L215, D218, and L220. E271 functions as the Proton acceptor in the catalytic mechanism.

This sequence belongs to the diacylglycerol/lipid kinase family. YegS lipid kinase subfamily. Mg(2+) serves as cofactor. The cofactor is Ca(2+).

The protein resides in the cytoplasm. Its function is as follows. Probably phosphorylates lipids; the in vivo substrate is unknown. The chain is Probable lipid kinase YegS from Shigella flexneri.